Reading from the N-terminus, the 607-residue chain is Elongation factor 4 (607 aa).

Residues 11–193 (SKIRNFSIIA…QIVEKVPAPT (183 aa)) form the tr-type G domain. GTP-binding positions include 23–28 (DHGKST) and 140–143 (NKID).

It belongs to the TRAFAC class translation factor GTPase superfamily. Classic translation factor GTPase family. LepA subfamily.

The protein resides in the cell membrane. It catalyses the reaction GTP + H2O = GDP + phosphate + H(+). Functionally, required for accurate and efficient protein synthesis under certain stress conditions. May act as a fidelity factor of the translation reaction, by catalyzing a one-codon backward translocation of tRNAs on improperly translocated ribosomes. Back-translocation proceeds from a post-translocation (POST) complex to a pre-translocation (PRE) complex, thus giving elongation factor G a second chance to translocate the tRNAs correctly. Binds to ribosomes in a GTP-dependent manner. The polypeptide is Elongation factor 4 (Bacillus cereus (strain ATCC 10987 / NRS 248)).